Reading from the N-terminus, the 219-residue chain is Probable GTP-binding protein EngB (219 aa).

The EngB-type G domain occupies 24-207 (VQPEIAFAGR…HELIESWVRP (184 aa)). Residues 32-39 (GRSNAGKS), 59-63 (GRTQH), 81-84 (DLPG), 148-151 (TKCD), and 186-188 (FSA) each bind GTP. Mg(2+) is bound by residues Ser39 and Thr61.

It belongs to the TRAFAC class TrmE-Era-EngA-EngB-Septin-like GTPase superfamily. EngB GTPase family. Mg(2+) serves as cofactor.

In terms of biological role, necessary for normal cell division and for the maintenance of normal septation. This Burkholderia ambifaria (strain MC40-6) protein is Probable GTP-binding protein EngB.